A 184-amino-acid chain; its full sequence is ATP synthase subunit b, chloroplastic (184 aa).

The chain crosses the membrane as a helical span at residues 27 to 49 (LATNLINLSVVLGVLIFFGKGVL).

Belongs to the ATPase B chain family. As to quaternary structure, F-type ATPases have 2 components, F(1) - the catalytic core - and F(0) - the membrane proton channel. F(1) has five subunits: alpha(3), beta(3), gamma(1), delta(1), epsilon(1). F(0) has four main subunits: a(1), b(1), b'(1) and c(10-14). The alpha and beta chains form an alternating ring which encloses part of the gamma chain. F(1) is attached to F(0) by a central stalk formed by the gamma and epsilon chains, while a peripheral stalk is formed by the delta, b and b' chains.

The protein localises to the plastid. It is found in the chloroplast thylakoid membrane. Functionally, f(1)F(0) ATP synthase produces ATP from ADP in the presence of a proton or sodium gradient. F-type ATPases consist of two structural domains, F(1) containing the extramembraneous catalytic core and F(0) containing the membrane proton channel, linked together by a central stalk and a peripheral stalk. During catalysis, ATP synthesis in the catalytic domain of F(1) is coupled via a rotary mechanism of the central stalk subunits to proton translocation. In terms of biological role, component of the F(0) channel, it forms part of the peripheral stalk, linking F(1) to F(0). The polypeptide is ATP synthase subunit b, chloroplastic (Nicotiana tabacum (Common tobacco)).